The chain runs to 270 residues: Acyl-[acyl-carrier-protein]--UDP-N-acetylglucosamine O-acyltransferase (270 aa).

It belongs to the transferase hexapeptide repeat family. LpxA subfamily. Homotrimer.

It localises to the cytoplasm. It catalyses the reaction a (3R)-hydroxyacyl-[ACP] + UDP-N-acetyl-alpha-D-glucosamine = a UDP-3-O-[(3R)-3-hydroxyacyl]-N-acetyl-alpha-D-glucosamine + holo-[ACP]. It participates in glycolipid biosynthesis; lipid IV(A) biosynthesis; lipid IV(A) from (3R)-3-hydroxytetradecanoyl-[acyl-carrier-protein] and UDP-N-acetyl-alpha-D-glucosamine: step 1/6. In terms of biological role, involved in the biosynthesis of lipid A, a phosphorylated glycolipid that anchors the lipopolysaccharide to the outer membrane of the cell. This is Acyl-[acyl-carrier-protein]--UDP-N-acetylglucosamine O-acyltransferase from Helicobacter pylori (strain P12).